The following is a 100-amino-acid chain: Small ribosomal subunit protein uS14 (100 aa).

The protein belongs to the universal ribosomal protein uS14 family. Part of the 30S ribosomal subunit. Contacts proteins S3 and S10.

Binds 16S rRNA, required for the assembly of 30S particles and may also be responsible for determining the conformation of the 16S rRNA at the A site. This Prochlorococcus marinus (strain MIT 9303) protein is Small ribosomal subunit protein uS14.